The sequence spans 317 residues: Glycerol-3-phosphate dehydrogenase [NAD(P)+] (317 aa).

NADPH-binding residues include Ser-14, Phe-15, Arg-35, and Lys-109. Sn-glycerol 3-phosphate is bound by residues Lys-109 and Gly-137. Ala-141 contributes to the NADPH binding site. Lys-192, Asp-248, Ser-258, Arg-259, and Asn-260 together coordinate sn-glycerol 3-phosphate. Lys-192 serves as the catalytic Proton acceptor. NADPH is bound at residue Arg-259. Positions 283 and 285 each coordinate NADPH.

It belongs to the NAD-dependent glycerol-3-phosphate dehydrogenase family.

It localises to the cytoplasm. It carries out the reaction sn-glycerol 3-phosphate + NAD(+) = dihydroxyacetone phosphate + NADH + H(+). The enzyme catalyses sn-glycerol 3-phosphate + NADP(+) = dihydroxyacetone phosphate + NADPH + H(+). Its pathway is membrane lipid metabolism; glycerophospholipid metabolism. Functionally, catalyzes the reduction of the glycolytic intermediate dihydroxyacetone phosphate (DHAP) to sn-glycerol 3-phosphate (G3P), the key precursor for phospholipid synthesis. The sequence is that of Glycerol-3-phosphate dehydrogenase [NAD(P)+] from Rickettsia akari (strain Hartford).